The following is a 244-amino-acid chain: Protein TIFY 10b (244 aa).

A Tify domain is found at 97–132 (QEPEKRQLTIFYGGKVLVFNDFPADKAKGLMQLASK). Residues 174–244 (QKPARANASD…AVVKPIERGQ (71 aa)) form a disordered region. Residues 185–210 (PIARKASLHRFLEKRKDRLNAKTPYQ) carry the Jas motif. Residues 187–194 (ARKASLHR) carry the Nuclear localization signal motif. Basic and acidic residues predominate over residues 194–204 (RFLEKRKDRLN).

Belongs to the TIFY/JAZ family. In terms of assembly, interacts with BHLH148. Interacts with COI1A and COI1B in a coronatine-dependent manner. Coronatine is an analog of jasmonoyl isoleucine (JA-Ile). Post-translationally, ubiquitinated. Targeted for degradation by the SCF(COI1) E3 ubiquitin ligase-proteasome pathway during jasmonate signaling.

It localises to the nucleus. Repressor of jasmonate responses. The polypeptide is Protein TIFY 10b (Oryza sativa subsp. japonica (Rice)).